Reading from the N-terminus, the 309-residue chain is MIIVTGGAGFIGSNIVRALNKIGYQDILVVDNLEKGAKFVNLVDLKIADYRDKDDFITSVRAKEVLGNIEAIFHLGACSSTMEWDGQFMMKNNYEYSKTLLHFCLKACIPFLYASSAAVYGGRTDCFIEEPQYEKPLNIYGYSKFLFDQYVRKIWPKARAPICGFRYFNVYGPRETHKGSMASVVFHLDKQIKAGKPPQLFLGSEQFKRDFIFVDDVAQINLWCWQNQISGIFNCGTGHAASFQTLADTVVAYHNSKPVQYVDFPENLKGCYQTFTQADITKLRTIGYDKPFKPLDEGVTHYLDWLNHQ.

NADP(+) is bound by residues F10–I11, D31–N32, K38, K53, L75–S79, and N92. Catalysis depends on Y140, which acts as the Proton acceptor. K144 provides a ligand contact to NADP(+). N169 is a binding site for substrate. Residues V170 and K178 each coordinate NADP(+). K178 functions as the Proton acceptor in the catalytic mechanism. Substrate contacts are provided by residues S180, H187, F201 to S204, R209, and Y272.

It belongs to the NAD(P)-dependent epimerase/dehydratase family. HldD subfamily. Homopentamer. NADP(+) serves as cofactor.

It catalyses the reaction ADP-D-glycero-beta-D-manno-heptose = ADP-L-glycero-beta-D-manno-heptose. It functions in the pathway nucleotide-sugar biosynthesis; ADP-L-glycero-beta-D-manno-heptose biosynthesis; ADP-L-glycero-beta-D-manno-heptose from D-glycero-beta-D-manno-heptose 7-phosphate: step 4/4. In terms of biological role, catalyzes the interconversion between ADP-D-glycero-beta-D-manno-heptose and ADP-L-glycero-beta-D-manno-heptose via an epimerization at carbon 6 of the heptose. The protein is ADP-L-glycero-D-manno-heptose-6-epimerase of Hamiltonella defensa subsp. Acyrthosiphon pisum (strain 5AT).